A 360-amino-acid polypeptide reads, in one-letter code: Histidinol-phosphate aminotransferase (360 aa).

At K223 the chain carries N6-(pyridoxal phosphate)lysine.

Belongs to the class-II pyridoxal-phosphate-dependent aminotransferase family. Histidinol-phosphate aminotransferase subfamily. As to quaternary structure, homodimer. It depends on pyridoxal 5'-phosphate as a cofactor.

It catalyses the reaction L-histidinol phosphate + 2-oxoglutarate = 3-(imidazol-4-yl)-2-oxopropyl phosphate + L-glutamate. Its pathway is amino-acid biosynthesis; L-histidine biosynthesis; L-histidine from 5-phospho-alpha-D-ribose 1-diphosphate: step 7/9. The polypeptide is Histidinol-phosphate aminotransferase (Bacillus subtilis subsp. natto).